Reading from the N-terminus, the 340-residue chain is L-threonine 3-dehydrogenase (340 aa).

Residue cysteine 38 participates in Zn(2+) binding. Catalysis depends on charge relay system residues threonine 40 and histidine 43. Zn(2+)-binding residues include histidine 63, glutamate 64, cysteine 93, cysteine 96, cysteine 99, and cysteine 107. NAD(+) is bound by residues isoleucine 175, aspartate 195, arginine 200, 262 to 264 (LGI), and 286 to 287 (IY).

This sequence belongs to the zinc-containing alcohol dehydrogenase family. In terms of assembly, homotetramer. The cofactor is Zn(2+).

Its subcellular location is the cytoplasm. It carries out the reaction L-threonine + NAD(+) = (2S)-2-amino-3-oxobutanoate + NADH + H(+). Its pathway is amino-acid degradation; L-threonine degradation via oxydo-reductase pathway; glycine from L-threonine: step 1/2. Catalyzes the NAD(+)-dependent oxidation of L-threonine to 2-amino-3-ketobutyrate. The polypeptide is L-threonine 3-dehydrogenase (Legionella pneumophila (strain Corby)).